A 305-amino-acid chain; its full sequence is UDP-3-O-acyl-N-acetylglucosamine deacetylase (305 aa).

Residues His-79, His-238, and Asp-242 each contribute to the Zn(2+) site. His-265 acts as the Proton donor in catalysis.

It belongs to the LpxC family. The cofactor is Zn(2+).

The enzyme catalyses a UDP-3-O-[(3R)-3-hydroxyacyl]-N-acetyl-alpha-D-glucosamine + H2O = a UDP-3-O-[(3R)-3-hydroxyacyl]-alpha-D-glucosamine + acetate. Its pathway is glycolipid biosynthesis; lipid IV(A) biosynthesis; lipid IV(A) from (3R)-3-hydroxytetradecanoyl-[acyl-carrier-protein] and UDP-N-acetyl-alpha-D-glucosamine: step 2/6. Catalyzes the hydrolysis of UDP-3-O-myristoyl-N-acetylglucosamine to form UDP-3-O-myristoylglucosamine and acetate, the committed step in lipid A biosynthesis. This is UDP-3-O-acyl-N-acetylglucosamine deacetylase from Vibrio parahaemolyticus serotype O3:K6 (strain RIMD 2210633).